We begin with the raw amino-acid sequence, 113 residues long: Large ribosomal subunit protein eL36z (113 aa).

Positions 78-88 (RKLGTHKRAKR) are enriched in basic residues. The interval 78–113 (RKLGTHKRAKRKREEMSSVLRKMRSLGGAAAAEKKM) is disordered.

This sequence belongs to the eukaryotic ribosomal protein eL36 family.

This chain is Large ribosomal subunit protein eL36z (RPL36A), found in Arabidopsis thaliana (Mouse-ear cress).